Here is a 171-residue protein sequence, read N- to C-terminus: Endoribonuclease YbeY (171 aa).

3 residues coordinate Zn(2+): H115, H119, and H125.

Belongs to the endoribonuclease YbeY family. Zn(2+) is required as a cofactor.

It localises to the cytoplasm. Single strand-specific metallo-endoribonuclease involved in late-stage 70S ribosome quality control and in maturation of the 3' terminus of the 16S rRNA. The sequence is that of Endoribonuclease YbeY from Tropheryma whipplei (strain TW08/27) (Whipple's bacillus).